The chain runs to 1100 residues: Formin-like protein 1 (1100 aa).

Low complexity predominate over residues 1-13 (MGNAAGSAEQPAG). Disordered stretches follow at residues 1–31 (MGNA…PMPA), 167–200 (STDN…PKSR), 446–474 (RFSE…TRPS), and 510–635 (TPSG…AKKP). Residue Gly2 is the site of N-myristoyl glycine attachment. Ser7 carries the post-translational modification Phosphoserine. Residues 14–28 (PAAPPPKQPAPPKQP) show a composition bias toward pro residues. One can recognise a GBD/FH3 domain in the interval 27-468 (QPMPAAGELE…PPEPEKAPPA (442 aa)). A Phosphoserine modification is found at Ser184. Over residues 517 to 538 (PTPGVPTGSPSPDLAPAAEPAP) the composition is skewed to low complexity. A compositionally biased stretch (pro residues) spans 539–615 (GAAPPPPPPL…PPPPPPPGGP (77 aa)). 2 positions are modified to phosphoserine: Ser624 and Ser693. Residues 632 to 1023 (AKKPIQTKFR…QEAGADTPGK (392 aa)) form the FH2 domain. The interval 1008 to 1037 (KKEAAAQEAGADTPGKGEPPAPKSPPKARR) is disordered. The span at 1013-1023 (AQEAGADTPGK) shows a compositional bias: low complexity. Ser1031 is modified (phosphoserine). A DAD domain is found at 1059-1090 (SDRDGAIEDIITVIKTVPFTARTGKRTSRLLC).

This sequence belongs to the formin homology family. In terms of assembly, interacts with RAC1, PFN1 and PFN2. Interacts (activated by RAC1) with SRGAP2 (via SH3 domain); regulates the actin filament severing activity of FMNL1. Myristoylation mediates membrane localization and blebbing. As to expression, expressed in heart, brain, placenta, lung, liver, skeletal muscle, kidney and pancreas.

The protein resides in the cytoplasm. The protein localises to the cell membrane. Its subcellular location is the cytoplasmic vesicle. It is found in the phagosome. It localises to the cell cortex. The protein resides in the cell projection. The protein localises to the bleb. In terms of biological role, may play a role in the control of cell motility and survival of macrophages. Plays a role in the regulation of cell morphology and cytoskeletal organization. Required in the cortical actin filament dynamics and cell shape. This chain is Formin-like protein 1 (FMNL1), found in Homo sapiens (Human).